Here is a 194-residue protein sequence, read N- to C-terminus: MMKFLKQVGDYTKEAIQAGKYIGQGLSVTFDHMRRRPITVQYPYEKLILSERFRGRIHFEFDKCIACEVCVRVCPINLPVVDWEFNKETKKKKLNHYSIDFGVCIFCGNCVEYCPTNCLSMTEEYELSTYDRHELNYDNVALGRLPYKVTNDPMVTPLREFAYLPKGAIDPHDLPAGSRRAGLRPEEIVEQSQQ.

2 4Fe-4S ferredoxin-type domains span residues 55-84 (GRIHFEFDKCIACEVCVRVCPINLPVVDWE) and 95-124 (NHYSIDFGVCIFCGNCVEYCPTNCLSMTEE). Positions 64, 67, 70, 74, 104, 107, 110, and 114 each coordinate [4Fe-4S] cluster. The disordered stretch occupies residues 173-194 (DLPAGSRRAGLRPEEIVEQSQQ).

It belongs to the complex I 23 kDa subunit family. In terms of assembly, NDH-1 is composed of at least 11 different subunits. It depends on [4Fe-4S] cluster as a cofactor.

The protein resides in the cellular thylakoid membrane. It catalyses the reaction a plastoquinone + NADH + (n+1) H(+)(in) = a plastoquinol + NAD(+) + n H(+)(out). It carries out the reaction a plastoquinone + NADPH + (n+1) H(+)(in) = a plastoquinol + NADP(+) + n H(+)(out). Functionally, NDH-1 shuttles electrons from an unknown electron donor, via FMN and iron-sulfur (Fe-S) centers, to quinones in the respiratory and/or the photosynthetic chain. The immediate electron acceptor for the enzyme in this species is believed to be plastoquinone. Couples the redox reaction to proton translocation, and thus conserves the redox energy in a proton gradient. The polypeptide is NAD(P)H-quinone oxidoreductase subunit I (ndhI) (Leptolyngbya boryana (Plectonema boryanum)).